A 281-amino-acid polypeptide reads, in one-letter code: Pantothenate synthetase (281 aa).

30–37 serves as a coordination point for ATP; it reads MGALHRGH. The Proton donor role is filled by H37. Q61 contacts (R)-pantoate. Q61 is a binding site for beta-alanine. 147 to 150 provides a ligand contact to ATP; the sequence is GEKD. Position 153 (Q153) interacts with (R)-pantoate. Residues I176 and 184 to 187 contribute to the ATP site; that span reads LSSR.

The protein belongs to the pantothenate synthetase family. In terms of assembly, homodimer.

The protein resides in the cytoplasm. It carries out the reaction (R)-pantoate + beta-alanine + ATP = (R)-pantothenate + AMP + diphosphate + H(+). It functions in the pathway cofactor biosynthesis; (R)-pantothenate biosynthesis; (R)-pantothenate from (R)-pantoate and beta-alanine: step 1/1. Catalyzes the condensation of pantoate with beta-alanine in an ATP-dependent reaction via a pantoyl-adenylate intermediate. The sequence is that of Pantothenate synthetase from Porphyromonas gingivalis (strain ATCC BAA-308 / W83).